The following is a 160-amino-acid chain: Cytochrome b6-f complex subunit 4 (160 aa).

Helical transmembrane passes span 36-56 (LLYV…GLAI), 95-115 (LLGV…PFIE), and 131-151 (TVFL…TMPI).

The protein belongs to the cytochrome b family. PetD subfamily. The 4 large subunits of the cytochrome b6-f complex are cytochrome b6, subunit IV (17 kDa polypeptide, petD), cytochrome f and the Rieske protein, while the 4 small subunits are petG, petL, petM and petN. The complex functions as a dimer.

It localises to the plastid. The protein localises to the chloroplast thylakoid membrane. Functionally, component of the cytochrome b6-f complex, which mediates electron transfer between photosystem II (PSII) and photosystem I (PSI), cyclic electron flow around PSI, and state transitions. This chain is Cytochrome b6-f complex subunit 4, found in Pyropia yezoensis (Susabi-nori).